The following is a 421-amino-acid chain: Methionine aminopeptidase 2 (421 aa).

The tract at residues 1 to 53 (MTDAEIENSPASDLKELNLENEGVEQQDQAKADESDPVESKKKKNKKKKKKKS) is disordered. A compositionally biased stretch (basic and acidic residues) spans 28-40 (DQAKADESDPVES). Ser35 is subject to Phosphoserine. Positions 41–53 (KKKKNKKKKKKKS) are enriched in basic residues. His174 serves as a coordination point for substrate. Positions 194, 205, and 274 each coordinate a divalent metal cation. His282 is a substrate binding site. A divalent metal cation contacts are provided by Glu307 and Glu402.

Belongs to the peptidase M24A family. Methionine aminopeptidase eukaryotic type 2 subfamily. The cofactor is Co(2+). Requires Zn(2+) as cofactor. It depends on Mn(2+) as a cofactor. Fe(2+) serves as cofactor.

The protein resides in the cytoplasm. The enzyme catalyses Release of N-terminal amino acids, preferentially methionine, from peptides and arylamides.. Functionally, cotranslationally removes the N-terminal methionine from nascent proteins. The N-terminal methionine is often cleaved when the second residue in the primary sequence is small and uncharged (Met-Ala-, Cys, Gly, Pro, Ser, Thr, or Val). This chain is Methionine aminopeptidase 2, found in Saccharomyces cerevisiae (strain RM11-1a) (Baker's yeast).